The chain runs to 239 residues: Small ribosomal subunit protein uS2 (239 aa).

It belongs to the universal ribosomal protein uS2 family.

This chain is Small ribosomal subunit protein uS2, found in Histophilus somni (strain 129Pt) (Haemophilus somnus).